The sequence spans 205 residues: tRNA (guanine-N(7)-)-methyltransferase (205 aa).

S-adenosyl-L-methionine contacts are provided by Glu-36, Glu-61, Asp-88, and Asp-109. Asp-109 is a catalytic residue. Lys-113 provides a ligand contact to substrate. Residues 115-120 (RHEKRR) are interaction with RNA. Substrate-binding positions include Asp-145 and 183–186 (TGYE).

This sequence belongs to the class I-like SAM-binding methyltransferase superfamily. TrmB family.

It catalyses the reaction guanosine(46) in tRNA + S-adenosyl-L-methionine = N(7)-methylguanosine(46) in tRNA + S-adenosyl-L-homocysteine. It functions in the pathway tRNA modification; N(7)-methylguanine-tRNA biosynthesis. Functionally, catalyzes the formation of N(7)-methylguanine at position 46 (m7G46) in tRNA. This Mycoplasmopsis agalactiae (strain NCTC 10123 / CIP 59.7 / PG2) (Mycoplasma agalactiae) protein is tRNA (guanine-N(7)-)-methyltransferase.